The following is a 470-amino-acid chain: MNPNQKIITIGSVSLGLVVLNILLHIVSITITVLVLPGNGNNGSCNETVIREYNETVRIEKIIQWHNTNVIEYIERPESDHFMNNTEPLCDAKGFAPFSKDNGIRIGSRGHVFVIREPFVSCSPTECRTFFLTQGSLLNDKHSNGTVKDRSPYRTLMSVEIGQSPNVYQARFEAVAWSATACHDGKKWMTIGVTGPDAKAVAVVHYGGIPTDVINSWAGDILRTQESSCTCIQGECYWVMTDGPANRQAQYRAFKAKQGKIIGQTEISFNGGHIEECSCYPNEGKVECVCRDNWTGTNRPVLVISSDLSYRVGYLCAGLPSDTPRGEDSQFTGSCTSPMGNQGYGVKGFGFRQGNDVWMGRTISRTSRSGFEILKVRNGWIQNSKEQIKRQVVVDNLNWSGYSGSFTLPVELTRRNCLVPCFWVEMIRGKPEEKTIWTSSSSIVMCGVDHEIADWSWHDGAILPFDIDKM.

Topologically, residues 1–14 are intravirion; the sequence is MNPNQKIITIGSVS. Residues 11-32 are involved in apical transport and lipid raft association; it reads GSVSLGLVVLNILLHIVSITIT. The chain crosses the membrane as a helical span at residues 15 to 35; that stretch reads LGLVVLNILLHIVSITITVLV. The tract at residues 32–86 is hypervariable stalk region; it reads TVLVLPGNGNNGSCNETVIREYNETVRIEKIIQWHNTNVIEYIERPESDHFMNNT. Topologically, residues 36-470 are virion surface; that stretch reads LPGNGNNGSC…AILPFDIDKM (435 aa). N-linked (GlcNAc...) asparagine; by host glycans are attached at residues N42, N46, N54, and N84. A head of neuraminidase region spans residues 89–470; that stretch reads LCDAKGFAPF…AILPFDIDKM (382 aa). Disulfide bonds link C90-C417, C122-C127, C182-C229, C231-C236, C277-C290, C279-C288, C316-C335, and C421-C446. R116 serves as a coordination point for substrate. N144 carries N-linked (GlcNAc...) asparagine; by host glycosylation. Catalysis depends on D149, which acts as the Proton donor/acceptor. R150 is a substrate binding site. Position 275 to 276 (275 to 276) interacts with substrate; it reads EE. Residue R291 participates in substrate binding. Ca(2+) is bound at residue D292. The N-linked (GlcNAc...) asparagine; by host glycan is linked to N293. The Ca(2+) site is built by G296 and D322. Residue R368 participates in substrate binding. Residue N398 is glycosylated (N-linked (GlcNAc...) asparagine; by host). The active-site Nucleophile is the Y402.

The protein belongs to the glycosyl hydrolase 34 family. In terms of assembly, homotetramer. Ca(2+) serves as cofactor. N-glycosylated.

It localises to the virion membrane. It is found in the host apical cell membrane. The enzyme catalyses Hydrolysis of alpha-(2-&gt;3)-, alpha-(2-&gt;6)-, alpha-(2-&gt;8)- glycosidic linkages of terminal sialic acid residues in oligosaccharides, glycoproteins, glycolipids, colominic acid and synthetic substrates.. Inhibited by the neuraminidase inhibitors zanamivir (Relenza) and oseltamivir (Tamiflu). These drugs interfere with the release of progeny virus from infected cells and are effective against all influenza strains. Resistance to neuraminidase inhibitors is quite rare. Its function is as follows. Catalyzes the removal of terminal sialic acid residues from viral and cellular glycoconjugates. Cleaves off the terminal sialic acids on the glycosylated HA during virus budding to facilitate virus release. Additionally helps virus spread through the circulation by further removing sialic acids from the cell surface. These cleavages prevent self-aggregation and ensure the efficient spread of the progeny virus from cell to cell. Otherwise, infection would be limited to one round of replication. Described as a receptor-destroying enzyme because it cleaves a terminal sialic acid from the cellular receptors. May facilitate viral invasion of the upper airways by cleaving the sialic acid moieties on the mucin of the airway epithelial cells. Likely to plays a role in the budding process through its association with lipid rafts during intracellular transport. May additionally display a raft-association independent effect on budding. Plays a role in the determination of host range restriction on replication and virulence. Sialidase activity in late endosome/lysosome traffic seems to enhance virus replication. The polypeptide is Neuraminidase (Influenza A virus (strain A/Turkey/Canada/1963 H6N8)).